Here is a 209-residue protein sequence, read N- to C-terminus: MTKIGLIDYGMGNLFSVQQAFKRFNQPLDIISDIKTLQSCDALILPGVGAFDPAMMNLRKTELVPSIIDWVNNGKPLFGICLGLQLLFEASDEGTSEGLGVIKGHIRRLPQEKDERIPHIGWSPIYKTNECPILENYPGSNWMYFVHSYSACPLEPKHTVAVTKFGKTDVSSMVWHKNTGACQFHPEKSGVAGQKIIFNWINWLKKNKF.

Residues 3-209 enclose the Glutamine amidotransferase type-1 domain; sequence KIGLIDYGMG…WINWLKKNKF (207 aa). Catalysis depends on Cys81, which acts as the Nucleophile. Catalysis depends on residues His185 and Glu187.

In terms of assembly, heterodimer of HisH and HisF.

It localises to the cytoplasm. It catalyses the reaction 5-[(5-phospho-1-deoxy-D-ribulos-1-ylimino)methylamino]-1-(5-phospho-beta-D-ribosyl)imidazole-4-carboxamide + L-glutamine = D-erythro-1-(imidazol-4-yl)glycerol 3-phosphate + 5-amino-1-(5-phospho-beta-D-ribosyl)imidazole-4-carboxamide + L-glutamate + H(+). The enzyme catalyses L-glutamine + H2O = L-glutamate + NH4(+). It participates in amino-acid biosynthesis; L-histidine biosynthesis; L-histidine from 5-phospho-alpha-D-ribose 1-diphosphate: step 5/9. In terms of biological role, IGPS catalyzes the conversion of PRFAR and glutamine to IGP, AICAR and glutamate. The HisH subunit catalyzes the hydrolysis of glutamine to glutamate and ammonia as part of the synthesis of IGP and AICAR. The resulting ammonia molecule is channeled to the active site of HisF. The polypeptide is Imidazole glycerol phosphate synthase subunit HisH (Prochlorococcus marinus (strain NATL2A)).